We begin with the raw amino-acid sequence, 286 residues long: MAELQKLSSRLKSVKVTRKITKAMELVAASKIRRAKESFFSNKEYFQIIQDIFDNLASKTEQIFLKKQMKFDKENNTNSILYIVINSDLGLCGAYNSSIAKEIKKEIKSKDKLFLIGKKGLLFLGKFKTQITNLDKVKEISTNYKNIKKISEKILSMFKSGDYKSIKIVYTKYVNAFTYLPTIKHALPILKSEKNINEATFSNLEFEPDPITIFQKAIPLYFSSLLYSCVLESHVSEVSSRRIAMENATKNADELGDQLKIELNTIRQSKITQEITEIVAGSETEI.

It belongs to the ATPase gamma chain family. As to quaternary structure, F-type ATPases have 2 components, CF(1) - the catalytic core - and CF(0) - the membrane proton channel. CF(1) has five subunits: alpha(3), beta(3), gamma(1), delta(1), epsilon(1). CF(0) has three main subunits: a, b and c.

It is found in the cell membrane. In terms of biological role, produces ATP from ADP in the presence of a proton gradient across the membrane. The gamma chain is believed to be important in regulating ATPase activity and the flow of protons through the CF(0) complex. In Mycoplasma mobile (strain ATCC 43663 / 163K / NCTC 11711) (Mesomycoplasma mobile), this protein is ATP synthase gamma chain.